The chain runs to 85 residues: Phosphocarrier protein HPr (85 aa).

The HPr domain occupies 1 to 85 (MFQRDIKITT…DLAKFLTTLK (85 aa)). The active-site Pros-phosphohistidine intermediate is the His15.

The protein belongs to the HPr family.

The protein localises to the cytoplasm. In terms of biological role, general (non sugar-specific) component of the phosphoenolpyruvate-dependent sugar phosphotransferase system (sugar PTS). This major carbohydrate active-transport system catalyzes the phosphorylation of incoming sugar substrates concomitantly with their translocation across the cell membrane. The phosphoryl group from phosphoenolpyruvate (PEP) is transferred to the phosphoryl carrier protein HPr by enzyme I. Phospho-HPr then transfers it to the PTS EIIA domain. The polypeptide is Phosphocarrier protein HPr (ptsH) (Buchnera aphidicola subsp. Baizongia pistaciae (strain Bp)).